A 274-amino-acid chain; its full sequence is Dermonecrotic toxin SdSicTox-betaIIB1bxiii (274 aa).

His5 is an active-site residue. 2 residues coordinate Mg(2+): Glu25 and Asp27. Residue His41 is the Nucleophile of the active site. Cystine bridges form between Cys45–Cys51 and Cys47–Cys190. Position 85 (Asp85) interacts with Mg(2+).

It belongs to the arthropod phospholipase D family. Class II subfamily. The cofactor is Mg(2+). As to expression, expressed by the venom gland.

Its subcellular location is the secreted. It carries out the reaction an N-(acyl)-sphingosylphosphocholine = an N-(acyl)-sphingosyl-1,3-cyclic phosphate + choline. The catalysed reaction is an N-(acyl)-sphingosylphosphoethanolamine = an N-(acyl)-sphingosyl-1,3-cyclic phosphate + ethanolamine. It catalyses the reaction a 1-acyl-sn-glycero-3-phosphocholine = a 1-acyl-sn-glycero-2,3-cyclic phosphate + choline. The enzyme catalyses a 1-acyl-sn-glycero-3-phosphoethanolamine = a 1-acyl-sn-glycero-2,3-cyclic phosphate + ethanolamine. Dermonecrotic toxins cleave the phosphodiester linkage between the phosphate and headgroup of certain phospholipids (sphingolipid and lysolipid substrates), forming an alcohol (often choline) and a cyclic phosphate. This toxin acts on sphingomyelin (SM). It may also act on ceramide phosphoethanolamine (CPE), lysophosphatidylcholine (LPC) and lysophosphatidylethanolamine (LPE), but not on lysophosphatidylserine (LPS), and lysophosphatidylglycerol (LPG). It acts by transphosphatidylation, releasing exclusively cyclic phosphate products as second products. Induces dermonecrosis, hemolysis, increased vascular permeability, edema, inflammatory response, and platelet aggregation. The sequence is that of Dermonecrotic toxin SdSicTox-betaIIB1bxiii from Sicarius cf. damarensis (strain GJB-2008) (Six-eyed sand spider).